The following is a 327-amino-acid chain: GPI-linked NAD(P)(+)--arginine ADP-ribosyltransferase 1 (327 aa).

An N-terminal signal peptide occupies residues M1–A22. Disulfide bonds link C53–C277 and C174–C224. An N-linked (GlcNAc...) asparagine glycan is attached at N65. One can recognise a TR mART core domain in the interval K73–S273. 2 residues coordinate NAD(+): Y121 and R179. Residues R179 and S202 contribute to the active site. S233 is a binding site for NAD(+). E240 is an active-site residue. Residue N253 is glycosylated (N-linked (GlcNAc...) asparagine). S295 carries the GPI-anchor amidated serine lipid modification. A propeptide spans A296 to F327 (removed in mature form).

It belongs to the Arg-specific ADP-ribosyltransferase family. As to expression, primarily in skeletal and cardiac muscle.

The protein resides in the sarcoplasmic reticulum membrane. The catalysed reaction is L-arginyl-[protein] + NAD(+) = N(omega)-(ADP-D-ribosyl)-L-arginyl-[protein] + nicotinamide + H(+). Functionally, has ADP-ribosyltransferase activity toward GLP1R. The chain is GPI-linked NAD(P)(+)--arginine ADP-ribosyltransferase 1 (ART1) from Oryctolagus cuniculus (Rabbit).